The primary structure comprises 182 residues: uncharacterized protein (182 aa).

2 BNR repeats span residues 58–69 (WISFDAGENWET) and 102–113 (YITDDRGESWRA).

This is an uncharacterized protein from Saccharomyces cerevisiae (strain ATCC 204508 / S288c) (Baker's yeast).